We begin with the raw amino-acid sequence, 259 residues long: Protein-tyrosine phosphatase RolB (259 aa).

The disordered stretch occupies residues 219-259 (GISRPAASSPEPDLTLRLSGPDQEGEEGVMKPAAVNLKKEA).

The catalysed reaction is O-phospho-L-tyrosyl-[protein] + H2O = L-tyrosyl-[protein] + phosphate. In terms of biological role, induces differentiation and growth of neoplastic roots (hairy roots). Seems to function as a tyrosine phosphatase. This Rhizobium rhizogenes (Agrobacterium rhizogenes) protein is Protein-tyrosine phosphatase RolB (rolB).